The following is a 336-amino-acid chain: 4-hydroxy-2-oxovalerate aldolase (336 aa).

The 251-residue stretch at 4-254 folds into the Pyruvate carboxyltransferase domain; the sequence is PRLTDTTLRD…NPGLDVLALM (251 aa). 12 to 13 provides a ligand contact to substrate; the sequence is RD. Residue aspartate 13 coordinates Mn(2+). Catalysis depends on histidine 16, which acts as the Proton acceptor. Substrate contacts are provided by serine 166 and histidine 193. Mn(2+) is bound by residues histidine 193 and histidine 195. Tyrosine 284 provides a ligand contact to substrate.

This sequence belongs to the 4-hydroxy-2-oxovalerate aldolase family.

It catalyses the reaction (S)-4-hydroxy-2-oxopentanoate = acetaldehyde + pyruvate. This Roseiflexus castenholzii (strain DSM 13941 / HLO8) protein is 4-hydroxy-2-oxovalerate aldolase.